We begin with the raw amino-acid sequence, 244 residues long: MQFSVLCKFLLLVTAVMAQTEYTPGFTTDVATTVTPTPLPSANVTTTSFSSASTETSTHSVTSTNITSIVPPPSTSHNSTTTTVPPTTSMNTTTTVPPTTSLNTTTTTAPPTTHVNSTTTVVPPTTHVNTTTVVPPTTHVNTTTVVPPTTHANTTSFVPTTTESSIHPITTGFYNTTFTTGYFNTSVTSVAVHNSTTVFPTSVPIVNTTSFNVTTIPSSAVHYASPSGLLALVVMLISAFAFLA.

Positions 1-18 are cleaved as a signal peptide; that stretch reads MQFSVLCKFLLLVTAVMA. Topologically, residues 19–223 are lumenal; sequence QTEYTPGFTT…TTIPSSAVHY (205 aa). 2 stretches are compositionally biased toward low complexity: residues 55–65 and 75–128; these read ETSTHSVTSTN and TSHN…TTHV. Residues 55-128 are disordered; sequence ETSTHSVTST…TTVVPPTTHV (74 aa). Residues 224–244 form a helical membrane-spanning segment; the sequence is ASPSGLLALVVMLISAFAFLA.

It is found in the endoplasmic reticulum membrane. This is an uncharacterized protein from Schizosaccharomyces pombe (strain 972 / ATCC 24843) (Fission yeast).